A 339-amino-acid chain; its full sequence is ATPase GET3 (339 aa).

37 to 44 (KGGVGKTT) provides a ligand contact to ATP. D66 is an active-site residue. ATP contacts are provided by E237 and N264. Zn(2+)-binding residues include C275 and C278.

This sequence belongs to the arsA ATPase family. In terms of assembly, homodimer.

Its subcellular location is the cytoplasm. The protein localises to the endoplasmic reticulum. In terms of biological role, ATPase required for the post-translational delivery of tail-anchored (TA) proteins to the endoplasmic reticulum. Recognizes and selectively binds the transmembrane domain of TA proteins in the cytosol. This complex then targets to the endoplasmic reticulum by membrane-bound receptors, where the tail-anchored protein is released for insertion. This process is regulated by ATP binding and hydrolysis. ATP binding drives the homodimer towards the closed dimer state, facilitating recognition of newly synthesized TA membrane proteins. ATP hydrolysis is required for insertion. Subsequently, the homodimer reverts towards the open dimer state, lowering its affinity for the membrane-bound receptor, and returning it to the cytosol to initiate a new round of targeting. This Rhodotorula glutinis (Yeast) protein is ATPase GET3.